The sequence spans 679 residues: Transketolase (679 aa).

Histidine 30 is a binding site for substrate. Residues histidine 69 and 116-118 (GPL) each bind thiamine diphosphate. A Mg(2+)-binding site is contributed by aspartate 157. Positions 158 and 187 each coordinate thiamine diphosphate. Residues asparagine 187 and isoleucine 189 each contribute to the Mg(2+) site. Residues histidine 262, arginine 358, and serine 385 each contribute to the substrate site. Histidine 262 is a binding site for thiamine diphosphate. Thiamine diphosphate contacts are provided by glutamate 417 and phenylalanine 444. The active-site Proton donor is glutamate 417. Positions 468, 476, and 527 each coordinate substrate.

The protein belongs to the transketolase family. Homodimer. Requires Mg(2+) as cofactor. The cofactor is Ca(2+). Mn(2+) is required as a cofactor. It depends on Co(2+) as a cofactor. Thiamine diphosphate serves as cofactor.

It carries out the reaction D-sedoheptulose 7-phosphate + D-glyceraldehyde 3-phosphate = aldehydo-D-ribose 5-phosphate + D-xylulose 5-phosphate. Its function is as follows. Catalyzes the transfer of a two-carbon ketol group from a ketose donor to an aldose acceptor, via a covalent intermediate with the cofactor thiamine pyrophosphate. In Kluyveromyces lactis (strain ATCC 8585 / CBS 2359 / DSM 70799 / NBRC 1267 / NRRL Y-1140 / WM37) (Yeast), this protein is Transketolase (TKL1).